We begin with the raw amino-acid sequence, 232 residues long: Aspartate/glutamate leucyltransferase (232 aa).

It belongs to the R-transferase family. Bpt subfamily.

Its subcellular location is the cytoplasm. The enzyme catalyses N-terminal L-glutamyl-[protein] + L-leucyl-tRNA(Leu) = N-terminal L-leucyl-L-glutamyl-[protein] + tRNA(Leu) + H(+). It carries out the reaction N-terminal L-aspartyl-[protein] + L-leucyl-tRNA(Leu) = N-terminal L-leucyl-L-aspartyl-[protein] + tRNA(Leu) + H(+). In terms of biological role, functions in the N-end rule pathway of protein degradation where it conjugates Leu from its aminoacyl-tRNA to the N-termini of proteins containing an N-terminal aspartate or glutamate. This is Aspartate/glutamate leucyltransferase from Vibrio vulnificus (strain CMCP6).